A 396-amino-acid chain; its full sequence is Ribosomal RNA large subunit methyltransferase I (396 aa).

Residues 2–81 (SVRLVLAKGR…ESIDIAFFTR (80 aa)) enclose the PUA domain.

It belongs to the methyltransferase superfamily. RlmI family.

It is found in the cytoplasm. It carries out the reaction cytidine(1962) in 23S rRNA + S-adenosyl-L-methionine = 5-methylcytidine(1962) in 23S rRNA + S-adenosyl-L-homocysteine + H(+). Specifically methylates the cytosine at position 1962 (m5C1962) of 23S rRNA. The sequence is that of Ribosomal RNA large subunit methyltransferase I from Escherichia coli O1:K1 / APEC.